A 256-amino-acid polypeptide reads, in one-letter code: Pimeloyl-[acyl-carrier protein] methyl ester esterase (256 aa).

The 228-residue stretch at 15 to 242 (HLVLLHGWGL…AAHAPFISHP (228 aa)) folds into the AB hydrolase-1 domain. Residues Trp-22, 82-83 (SL), and 143-147 (FLALQ) each bind substrate. Residue Ser-82 is the Nucleophile of the active site. Catalysis depends on residues Asp-207 and His-235. His-235 contributes to the substrate binding site.

The protein belongs to the AB hydrolase superfamily. Carboxylesterase BioH family. In terms of assembly, monomer.

It localises to the cytoplasm. It carries out the reaction 6-carboxyhexanoyl-[ACP] methyl ester + H2O = 6-carboxyhexanoyl-[ACP] + methanol + H(+). Its pathway is cofactor biosynthesis; biotin biosynthesis. The physiological role of BioH is to remove the methyl group introduced by BioC when the pimeloyl moiety is complete. It allows to synthesize pimeloyl-ACP via the fatty acid synthetic pathway through the hydrolysis of the ester bonds of pimeloyl-ACP esters. In Escherichia coli (strain SMS-3-5 / SECEC), this protein is Pimeloyl-[acyl-carrier protein] methyl ester esterase.